The sequence spans 49 residues: Large ribosomal subunit protein bL33 (49 aa).

It belongs to the bacterial ribosomal protein bL33 family.

The polypeptide is Large ribosomal subunit protein bL33 (Lacticaseibacillus casei (strain BL23) (Lactobacillus casei)).